A 1247-amino-acid chain; its full sequence is Nitric oxide synthase (1247 aa).

The tract at residues 13–33 is disordered; that stretch reads EVAEGRESSKANHIGEERRGY. Residue Ser146 participates in (6R)-L-erythro-5,6,7,8-tetrahydrobiopterin binding. Residue Cys224 coordinates heme b. Gln287, Trp396, Tyr397, Glu401, and Asn406 together coordinate L-arginine. (6R)-L-erythro-5,6,7,8-tetrahydrobiopterin-binding residues include Trp487 and Phe500. Tyr515 is a binding site for heme b. The calmodulin-binding stretch occupies residues 537-557; it reads PRRKFNFKQIARAVKFTSKLF. Residues 567-766 enclose the Flavodoxin-like domain; it reads ATVLYATETG…AFRKWAPEVF (200 aa). Position 712 to 743 (712 to 743) interacts with FMN; it reads VFALGSSAYPNFCAFGKYIDNILGELGGERLM. An FAD-binding FR-type domain is found at 795–1065; sequence NTVRYAPVAE…VRSAPSFHMS (271 aa). Residues 855–866 and 998–1008 contribute to the FAD site; these read YEPGDHVGIFPA and LQPRFYSISSS. Residues 1073 to 1091 and 1170 to 1185 contribute to the NADP(+) site; these read ILIGPGTGIAPFRSFWQEW and KGHIYVCGDVTMAEHV.

This sequence belongs to the NOS family. It depends on heme b as a cofactor. FAD is required as a cofactor. Requires FMN as cofactor.

The enzyme catalyses 2 L-arginine + 3 NADPH + 4 O2 + H(+) = 2 L-citrulline + 2 nitric oxide + 3 NADP(+) + 4 H2O. With respect to regulation, stimulated by calcium/calmodulin. In terms of biological role, produces nitric oxide (NO) which is a messenger molecule with diverse functions throughout the body. Nitric oxide limits plasmodium development in the midgut. This is Nitric oxide synthase from Anopheles stephensi (Indo-Pakistan malaria mosquito).